Reading from the N-terminus, the 428-residue chain is Kynureninase (428 aa).

Pyridoxal 5'-phosphate-binding positions include T104, T105, 132–135 (FPSD), D213, H216, and Y238. K239 is subject to N6-(pyridoxal phosphate)lysine. W267 and T295 together coordinate pyridoxal 5'-phosphate.

It belongs to the kynureninase family. As to quaternary structure, homodimer. The cofactor is pyridoxal 5'-phosphate.

It carries out the reaction L-kynurenine + H2O = anthranilate + L-alanine + H(+). The enzyme catalyses 3-hydroxy-L-kynurenine + H2O = 3-hydroxyanthranilate + L-alanine + H(+). It participates in amino-acid degradation; L-kynurenine degradation; L-alanine and anthranilate from L-kynurenine: step 1/1. The protein operates within cofactor biosynthesis; NAD(+) biosynthesis; quinolinate from L-kynurenine: step 2/3. Catalyzes the cleavage of L-kynurenine (L-Kyn) and L-3-hydroxykynurenine (L-3OHKyn) into anthranilic acid (AA) and 3-hydroxyanthranilic acid (3-OHAA), respectively. The sequence is that of Kynureninase from Bacillus thuringiensis subsp. konkukian (strain 97-27).